The primary structure comprises 510 residues: NAD(P)H-quinone oxidoreductase subunit 2 B, chloroplastic (510 aa).

13 consecutive transmembrane segments (helical) span residues 24-44, 57-77, 99-119, 124-144, 149-169, 183-203, 227-247, 295-315, 323-343, 354-374, 395-415, 418-438, and 482-502; these read LLLF…GLIL, IPWL…ALLF, IFQF…VEYI, MAIT…MFLC, LITI…LSGY, YLLM…WLYG, PGIS…LSLA, WHLL…LIAI, MLAY…IVGD, YMLF…LFGL, ALSL…AGFF, LHLF…IGLL, and LSMI…NPIV.

Belongs to the complex I subunit 2 family. In terms of assembly, NDH is composed of at least 16 different subunits, 5 of which are encoded in the nucleus.

It localises to the plastid. It is found in the chloroplast thylakoid membrane. It carries out the reaction a plastoquinone + NADH + (n+1) H(+)(in) = a plastoquinol + NAD(+) + n H(+)(out). The catalysed reaction is a plastoquinone + NADPH + (n+1) H(+)(in) = a plastoquinol + NADP(+) + n H(+)(out). In terms of biological role, NDH shuttles electrons from NAD(P)H:plastoquinone, via FMN and iron-sulfur (Fe-S) centers, to quinones in the photosynthetic chain and possibly in a chloroplast respiratory chain. The immediate electron acceptor for the enzyme in this species is believed to be plastoquinone. Couples the redox reaction to proton translocation, and thus conserves the redox energy in a proton gradient. The chain is NAD(P)H-quinone oxidoreductase subunit 2 B, chloroplastic from Manihot esculenta (Cassava).